The sequence spans 126 residues: MNSGGFIQENFSIFQASHEGSWAILAILFLVAYFLFRGGKSKAGTIIHMIARLFFVIMLVTGASMLIAYQFAYFFFIKGILAVLLIGFMEAALGKAKRNENSLGMLFAVLVVLVVIVLMGYGIIRF.

4 consecutive transmembrane segments (helical) span residues 16 to 36 (ASHEGSWAILAILFLVAYFLF), 43 to 63 (AGTIIHMIARLFFVIMLVTGA), 66 to 86 (LIAYQFAYFFFIKGILAVLLI), and 104 to 124 (GMLFAVLVVLVVIVLMGYGII).

The protein belongs to the UPF0344 family.

Its subcellular location is the cell membrane. This chain is UPF0344 protein ABC2900, found in Shouchella clausii (strain KSM-K16) (Alkalihalobacillus clausii).